The following is a 285-amino-acid chain: UPF0703 protein YcgQ (285 aa).

4 helical membrane passes run 4–24 (LLVL…GNLT), 34–54 (LSFI…YLFI), 89–109 (LIYV…IATL), and 210–230 (FVLR…GMLV).

Belongs to the UPF0703 family.

The protein resides in the cell membrane. The sequence is that of UPF0703 protein YcgQ (ycgQ) from Bacillus subtilis (strain 168).